Reading from the N-terminus, the 503-residue chain is Probable cytosol aminopeptidase (503 aa).

Residues Lys270 and Asp275 each coordinate Mn(2+). The active site involves Lys282. The Mn(2+) site is built by Asp293, Asp352, and Glu354. Arg356 is an active-site residue.

The protein belongs to the peptidase M17 family. Mn(2+) serves as cofactor.

The protein resides in the cytoplasm. It carries out the reaction Release of an N-terminal amino acid, Xaa-|-Yaa-, in which Xaa is preferably Leu, but may be other amino acids including Pro although not Arg or Lys, and Yaa may be Pro. Amino acid amides and methyl esters are also readily hydrolyzed, but rates on arylamides are exceedingly low.. The enzyme catalyses Release of an N-terminal amino acid, preferentially leucine, but not glutamic or aspartic acids.. Presumably involved in the processing and regular turnover of intracellular proteins. Catalyzes the removal of unsubstituted N-terminal amino acids from various peptides. The chain is Probable cytosol aminopeptidase from Yersinia pseudotuberculosis serotype O:1b (strain IP 31758).